A 429-amino-acid chain; its full sequence is GTPase Obg (429 aa).

The Obg domain maps to 1 to 158; that stretch reads MFYDTAKIYV…RWLLLELKLL (158 aa). The OBG-type G domain maps to 159-329; it reads ADVGLVGYPN…LIYRLWEIIS (171 aa). Residues 165–172, 190–194, 212–215, 282–285, and 310–312 contribute to the GTP site; these read GYPNAGKS, FTTLT, DIPG, NKMD, and SAL. 2 residues coordinate Mg(2+): S172 and T192. An OCT domain is found at 344–421; the sequence is IKEQPEEGFV…IGKFEFYFVD (78 aa).

The protein belongs to the TRAFAC class OBG-HflX-like GTPase superfamily. OBG GTPase family. Monomer. Mg(2+) serves as cofactor.

It localises to the cytoplasm. An essential GTPase which binds GTP, GDP and possibly (p)ppGpp with moderate affinity, with high nucleotide exchange rates and a fairly low GTP hydrolysis rate. Plays a role in control of the cell cycle, stress response, ribosome biogenesis and in those bacteria that undergo differentiation, in morphogenesis control. This Carboxydothermus hydrogenoformans (strain ATCC BAA-161 / DSM 6008 / Z-2901) protein is GTPase Obg.